Reading from the N-terminus, the 232-residue chain is UPF0502 protein mma_2112 (232 aa).

This sequence belongs to the UPF0502 family.

The sequence is that of UPF0502 protein mma_2112 from Janthinobacterium sp. (strain Marseille) (Minibacterium massiliensis).